The primary structure comprises 174 residues: Co-chaperone protein HscB homolog (174 aa).

One can recognise a J domain in the interval 2-74 (NYFELFKFPP…IRRAEHMLSL (73 aa)).

This sequence belongs to the HscB family. In terms of assembly, interacts with HscA and stimulates its ATPase activity.

Its function is as follows. Co-chaperone involved in the maturation of iron-sulfur cluster-containing proteins. Seems to help targeting proteins to be folded toward HscA. The polypeptide is Co-chaperone protein HscB homolog (Shewanella oneidensis (strain ATCC 700550 / JCM 31522 / CIP 106686 / LMG 19005 / NCIMB 14063 / MR-1)).